The sequence spans 494 residues: AAA-ATPase At2g18190 (494 aa).

Residues 13–29 traverse the membrane as a helical segment; sequence SSLFTAYASLTGFLMLF. 251–258 provides a ligand contact to ATP; sequence GPPGTGKS. Residues 459–470 show a composition bias toward basic and acidic residues; it reads TCRKLDGDDKHN. The segment at 459-494 is disordered; that stretch reads TCRKLDGDDKHNVSSTNDLKKTKKKKKGGKGKAKGN. Over residues 479–494 the composition is skewed to basic residues; that stretch reads KTKKKKKGGKGKAKGN.

The protein belongs to the AAA ATPase family. BCS1 subfamily. Mg(2+) is required as a cofactor.

The protein localises to the membrane. It catalyses the reaction ATP + H2O = ADP + phosphate + H(+). This chain is AAA-ATPase At2g18190, found in Arabidopsis thaliana (Mouse-ear cress).